Consider the following 266-residue polypeptide: Phosphatidylglycerol--prolipoprotein diacylglyceryl transferase (266 aa).

4 helical membrane passes run 14–34 (FGPLQIHWYGLMYLAGFAFFW), 55–75 (FLFYGALGVILGGRIGYILFY), 91–111 (WKGGMAFHGGLIGVMVAMWLF), and 117–137 (VSMFVVADFVAPMVPVGLFFG). Arginine 138 serves as a coordination point for a 1,2-diacyl-sn-glycero-3-phospho-(1'-sn-glycerol). Transmembrane regions (helical) follow at residues 172–192 (YPTQLLEALLEGIVLFIILMF), 201–221 (GAASGLFIGLYGLFRFYVEFF), and 235–255 (WVTMGQLLSLPMILIGFALVV).

Belongs to the Lgt family.

The protein resides in the cell inner membrane. The enzyme catalyses L-cysteinyl-[prolipoprotein] + a 1,2-diacyl-sn-glycero-3-phospho-(1'-sn-glycerol) = an S-1,2-diacyl-sn-glyceryl-L-cysteinyl-[prolipoprotein] + sn-glycerol 1-phosphate + H(+). Its pathway is protein modification; lipoprotein biosynthesis (diacylglyceryl transfer). In terms of biological role, catalyzes the transfer of the diacylglyceryl group from phosphatidylglycerol to the sulfhydryl group of the N-terminal cysteine of a prolipoprotein, the first step in the formation of mature lipoproteins. In Hydrogenovibrio crunogenus (strain DSM 25203 / XCL-2) (Thiomicrospira crunogena), this protein is Phosphatidylglycerol--prolipoprotein diacylglyceryl transferase.